A 355-amino-acid polypeptide reads, in one-letter code: 45 kDa calcium-binding protein (355 aa).

The signal sequence occupies residues 1–29 (MASRQAPLCGLAPCCLWLLGVVLLMNASA). N-linked (GlcNAc...) asparagine glycosylation is present at N33. EF-hand domains are found at residues 91-126 (KSRR…KTAE) and 130-165 (EAVA…TKGH). Position 92 is a phosphoserine (S92). Ca(2+)-binding residues include D104, N106, D108, R110, E115, D143, D145, D147, H149, and E154. 2 positions are modified to phosphothreonine: T186 and T210. EF-hand domains follow at residues 226–261 (MLQF…TVEN), 271–306 (WVRD…MNEF), and 307–342 (SALN…FTGS). Ca(2+) is bound by residues D239, D241, D243, K245, and E250. Residue T258 is modified to Phosphothreonine. Ca(2+) is bound by residues D284, N286, and D288. A Phosphothreonine modification is found at T292. E295, D320, N322, N324, Y326, and E331 together coordinate Ca(2+). The necessary for intracellular retention in Golgi apparatus lumen stretch occupies residues 302–355 (PMNEFSALNEAKQMIAIADENQNHYLEPEEVLKYSEFFTGSKLVDYARSVHEEF).

The protein belongs to the CREC family.

Its subcellular location is the golgi apparatus lumen. Functionally, may regulate calcium-dependent activities in the endoplasmic reticulum lumen or post-ER compartment. This Bos taurus (Bovine) protein is 45 kDa calcium-binding protein (SDF4).